Consider the following 773-residue polypeptide: Lon protease homolog 2, peroxisomal (773 aa).

One can recognise a Lon N-terminal domain in the interval 9 to 198; that stretch reads LPVILVTSGV…MCIKWMNEKK (190 aa). Residue 336–343 coordinates ATP; sequence GPPGIGKT. A Lon proteolytic domain is found at 587–766; that stretch reads PLPAGVCFGL…EDVIGAMMDK (180 aa). Active-site residues include S672 and K715. Residues 771–773 carry the Microbody targeting signal motif; sequence AKL.

The protein belongs to the peptidase S16 family.

The protein localises to the peroxisome matrix. It catalyses the reaction Hydrolysis of proteins in presence of ATP.. Functionally, ATP-dependent serine protease that mediates the selective degradation of misfolded and unassembled polypeptides in the peroxisomal matrix. Necessary for type 2 peroxisome targeting signal (PTS2)-containing protein processing and facilitates peroxisome matrix protein import. This chain is Lon protease homolog 2, peroxisomal, found in Caenorhabditis elegans.